The primary structure comprises 666 residues: MTREEAKKRIERLRELIEYHNYRYYVLDSPEISDEEYDKLYRELVTLEKQFPEFITPDSPTQRVGAPPAKEFATVTHEVPMLSLDNAFTEDEIKAFDQRVRSALNQQHVEYFCEHKLDGLAVSLLYENGLFVRGSTRGNGYVGEDVTANLKTIKTIPLRLKGENIPPVVEIRGEAFMMLRDFEALNEQRQALGQPLFANPRNAAAGSIRQLDSSITAQRKLYFMPYGFGLVQGMDFETQERFLKQCQEWGFRINEHNRKASSIEEALEFIRYWTEHRVELPFPADGVVIKVNNLRYWDILGTTAHAPRYAIAYKFPAEEKETKLKDVVFQVGRTGIITPVAMLEPVVLDGATVSRATLHNFDIVRQLDVRKGDVVKLKRAGMVIPEIIGVAAEKRTGKEEQIEPPTTCPVCGGPTEWDGAYLKCVNITCPAQLKGHLLHWASRDAMDIDGLGESIIENLVDMGLVKNIADLYKLSVQDLLTLPRLAQRSATKLYENIQRSKDRPFFRVLYGLGIPRVGLKTAQMLAEHFGSINALLNATMDELTSIEGIGTDTAETILKALQSPQVHELIDQLKTLGLKMEQESIEGPLKGLTFVFTGTLTSMSRGDAAKLVQSLGGKVASSVSKNVDYVVVGEDPGSKLDKAQKLGLTIIDEEAFLKMVKREHNG.

Residues 34–38 (DEEYD), 83–84 (SL), and E114 contribute to the NAD(+) site. K116 functions as the N6-AMP-lysine intermediate in the catalytic mechanism. NAD(+) contacts are provided by R137, E174, K290, and K314. Zn(2+) is bound by residues C408, C411, C424, and C429. The region spanning 584 to 666 (SIEGPLKGLT…LKMVKREHNG (83 aa)) is the BRCT domain.

Belongs to the NAD-dependent DNA ligase family. LigA subfamily. It depends on Mg(2+) as a cofactor. Requires Mn(2+) as cofactor.

The enzyme catalyses NAD(+) + (deoxyribonucleotide)n-3'-hydroxyl + 5'-phospho-(deoxyribonucleotide)m = (deoxyribonucleotide)n+m + AMP + beta-nicotinamide D-nucleotide.. Its function is as follows. DNA ligase that catalyzes the formation of phosphodiester linkages between 5'-phosphoryl and 3'-hydroxyl groups in double-stranded DNA using NAD as a coenzyme and as the energy source for the reaction. It is essential for DNA replication and repair of damaged DNA. The protein is DNA ligase of Coprothermobacter proteolyticus (strain ATCC 35245 / DSM 5265 / OCM 4 / BT).